Consider the following 136-residue polypeptide: Large ribosomal subunit protein uL16 (136 aa).

This sequence belongs to the universal ribosomal protein uL16 family. In terms of assembly, part of the 50S ribosomal subunit.

Binds 23S rRNA and is also seen to make contacts with the A and possibly P site tRNAs. This is Large ribosomal subunit protein uL16 from Alteromonas mediterranea (strain DSM 17117 / CIP 110805 / LMG 28347 / Deep ecotype).